A 309-amino-acid chain; its full sequence is Ribosomal RNA small subunit methyltransferase H (309 aa).

Residues Gly33–His35, Asp53, Phe79, Asp100, and Gln107 contribute to the S-adenosyl-L-methionine site.

This sequence belongs to the methyltransferase superfamily. RsmH family.

Its subcellular location is the cytoplasm. The enzyme catalyses cytidine(1402) in 16S rRNA + S-adenosyl-L-methionine = N(4)-methylcytidine(1402) in 16S rRNA + S-adenosyl-L-homocysteine + H(+). Its function is as follows. Specifically methylates the N4 position of cytidine in position 1402 (C1402) of 16S rRNA. The sequence is that of Ribosomal RNA small subunit methyltransferase H from Clostridium botulinum (strain Okra / Type B1).